Here is a 352-residue protein sequence, read N- to C-terminus: Thymidine kinase (352 aa).

32 to 39 (GVYGIGKS) contributes to the ATP binding site. Residue glutamate 60 is the Proton acceptor of the active site. Substrate-binding residues include tyrosine 78, glutamine 102, phenylalanine 105, and phenylalanine 148. Arginine 192 is an ATP binding site. Arginine 198 lines the substrate pocket.

The protein belongs to the herpesviridae thymidine kinase family. As to quaternary structure, homodimer.

It catalyses the reaction thymidine + ATP = dTMP + ADP + H(+). Its function is as follows. Catalyzes the transfer of the gamma-phospho group of ATP to thymidine to generate dTMP in the salvage pathway of pyrimidine synthesis. The dTMP serves as a substrate for DNA polymerase during viral DNA replication. Allows the virus to be reactivated and to grow in non-proliferative cells lacking a high concentration of phosphorylated nucleic acid precursors. This is Thymidine kinase from Equine herpesvirus 4 (strain 1942) (EHV-4).